A 37-amino-acid polypeptide reads, in one-letter code: Large ribosomal subunit protein bL36c (37 aa).

Belongs to the bacterial ribosomal protein bL36 family.

The protein localises to the plastid. It localises to the chloroplast. In Welwitschia mirabilis (Tree tumbo), this protein is Large ribosomal subunit protein bL36c.